Here is a 418-residue protein sequence, read N- to C-terminus: Glutamyl-tRNA reductase (418 aa).

Residues 49 to 52, S108, 113 to 115, and Q119 contribute to the substrate site; these read TCNR and EPQ. The active-site Nucleophile is the C50. 188-193 contributes to the NADP(+) binding site; it reads GAGETI.

It belongs to the glutamyl-tRNA reductase family. As to quaternary structure, homodimer.

The catalysed reaction is (S)-4-amino-5-oxopentanoate + tRNA(Glu) + NADP(+) = L-glutamyl-tRNA(Glu) + NADPH + H(+). Its pathway is porphyrin-containing compound metabolism; protoporphyrin-IX biosynthesis; 5-aminolevulinate from L-glutamyl-tRNA(Glu): step 1/2. Functionally, catalyzes the NADPH-dependent reduction of glutamyl-tRNA(Glu) to glutamate 1-semialdehyde (GSA). This chain is Glutamyl-tRNA reductase, found in Aliivibrio fischeri (strain ATCC 700601 / ES114) (Vibrio fischeri).